The primary structure comprises 141 residues: NADH dehydrogenase [ubiquinone] 1 alpha subcomplex subunit 11 (141 aa).

A2 is modified (N-acetylalanine). The next 2 helical transmembrane spans lie at 21–43 (KAYS…RVTL) and 58–80 (QYTF…SAHV).

This sequence belongs to the complex I NDUFA11 subunit family. As to quaternary structure, complex I is composed of 45 different subunits.

The protein localises to the mitochondrion inner membrane. Its function is as follows. Accessory subunit of the mitochondrial membrane respiratory chain NADH dehydrogenase (Complex I), that is believed not to be involved in catalysis. Complex I functions in the transfer of electrons from NADH to the respiratory chain. The immediate electron acceptor for the enzyme is believed to be ubiquinone. This chain is NADH dehydrogenase [ubiquinone] 1 alpha subcomplex subunit 11 (NDUFA11), found in Homo sapiens (Human).